The sequence spans 165 residues: MDIAHDLQSIGAQEQALVFPHFDPARAWALGNRMHALATSRGHAIAIDIVTFGQPLFYAALAGATPDNADWVRRKRNVVAHFRRSSYAIGLRMQQAGATLADKHGLPVAEYASHGGSFPLTVAGAGVIGSITASGLPQRADHEFVVEALCAELGHDYAVLALARS.

This sequence belongs to the UPF0303 family.

In Burkholderia orbicola (strain MC0-3), this protein is UPF0303 protein Bcenmc03_1534.